The sequence spans 376 residues: Quinolinate synthase (376 aa).

Iminosuccinate contacts are provided by His-57 and Ser-78. Cys-123 lines the [4Fe-4S] cluster pocket. Iminosuccinate contacts are provided by residues 149–151 (YAN) and Ser-166. Cys-210 is a binding site for [4Fe-4S] cluster. Iminosuccinate is bound by residues 236-238 (HPE) and Thr-253. Cys-307 is a [4Fe-4S] cluster binding site.

Belongs to the quinolinate synthase family. Type 1 subfamily. It depends on [4Fe-4S] cluster as a cofactor.

Its subcellular location is the cytoplasm. It catalyses the reaction iminosuccinate + dihydroxyacetone phosphate = quinolinate + phosphate + 2 H2O + H(+). The protein operates within cofactor biosynthesis; NAD(+) biosynthesis; quinolinate from iminoaspartate: step 1/1. Catalyzes the condensation of iminoaspartate with dihydroxyacetone phosphate to form quinolinate. The protein is Quinolinate synthase of Paraburkholderia phymatum (strain DSM 17167 / CIP 108236 / LMG 21445 / STM815) (Burkholderia phymatum).